Here is a 1278-residue protein sequence, read N- to C-terminus: MATSKSQQFQLIEGMELQITVTGLPNGSSVRAEFHLKNCTRAWILHWGCIYQGNNHWYIPSEHSSKQGALQTTFVKSGDAYVVILELRDPRVRAIEFVLKDGSHNRWLRQHNGNFRVEIPWNDLHAHHRIPKTLIERRAHKIWDRKGRPQSSAREQQIDYDNAVRELHAELARGISLDELQANSTVPVEKEETSEPHHTMIQSYRRKHDVQKWLQKYTEPINRSGSVKSSALAELSKRSVGQENLVSQKSFHVRNYEITVLQRDVKGDCRLWIATNMAGPTVLHWGVAKSSAGEWLIPPPDVLPEKSKFVHGACQTQFTDMSSREHSYQFIDINLKRGGFVGIQFVIWSGGYWVNNNGANFVVNLKSADSTSGKLDVDEKYVLKWLLDEISEREKEAERSLMHRFNIATELTERCKDEGEGGCIGIMVWMRFMATRHLTWNKNYNVKPREISEALERFTNLMEKIYLQQPNKREIVRLTMALVGRGGQGDVGQRIRDEILVIQRNNHCKSGMMEEWHQKLHNNSSADDVIICEALLNYVRSDFRIDAYWQTLQTNGLTKERLASYDRPIVSEPRFRSDSKEGLIRDLTMYLKTLKAVHSGADLESAIDTFLSPSKGHHVFAVNGLSPKLQDLLNLVKRLVREENTEPLIEKLVDARIQLHPALRAPRTRAKDLLFLDIALESCFKTTIEKRLISLNFNNPPEIIYVICVVLENLCLSIVNNEEIIFCTKDWYRVSEAYRPHDVQWALQTKAVLDRLQLVLADRCQHYFTIIQPTAKYLGQLLRVDKHGIDVFTEEVIRAGPGAVLSTLVNRFDPSLRKIANLGCWQVISSADAYGFVVCVNELIVVQNKFYSKPTVIIASKVTGEEEIPAGVVAVLTPSMIDVLSHVSIRARNSKICFATCFDQNVLSNLKSKEGRAISIHTKSTGLVISDGNNSDVSVRHIFISSVPRGVISKGKKFCGHYVISSKEFTDERVGSKSYNIKFLRERVPSWIKIPTSAALPFGTFENILSDDSNKDVARRISVLKDSLNRGDLTKLKSIQEAILQMSAPMALRNELITKLRSERMPYLGDESGWNRSWVAIKKVWASKWNERAYVSCKKNKLDHDAVCMAVLIQEVICGDYAFVIHTNNPVSGDSSEIYTEIVKGLGETLVGAYPGRAMSFITKKTNLKSPTVISYPSKRIGLYSKPSIIFRSDSNNEDLEGNAGAGLYDSVIMDEAEEVVVDYSREPLIMDKSFRVRLFSAIAEAGNVIESIYGCPQDIEGVVKGGHIYIVQARPQV.

The first 23 residues, 1–23, serve as a signal peptide directing secretion; that stretch reads MATSKSQQFQLIEGMELQITVTG. His-886 (tele-phosphohistidine intermediate) is an active-site residue.

This sequence belongs to the PEP-utilizing enzyme family. In terms of assembly, homodimer. It depends on Mg(2+) as a cofactor.

It carries out the reaction [(1-&gt;4)-alpha-D-glucosyl](n) + n ATP + n H2O = [(1-&gt;4)-6-phospho-alpha-D-glucosyl](n) + n AMP + n phosphate + 2n H(+). Mediates the incorporation of phosphate into alpha-glucan, mostly at the C-6 position of glucose units. The protein is Alpha-glucan water dikinase 2 (GWD2) of Arabidopsis thaliana (Mouse-ear cress).